Consider the following 474-residue polypeptide: Ribulose bisphosphate carboxylase large chain (474 aa).

Residues N122 and T172 each contribute to the substrate site. The Proton acceptor role is filled by K174. K176 is a binding site for substrate. Mg(2+)-binding residues include K200, D202, and E203. Position 200 is an N6-carboxylysine (K200). Residue H293 is the Proton acceptor of the active site. Substrate contacts are provided by R294, H326, and S378.

It belongs to the RuBisCO large chain family. Type I subfamily. As to quaternary structure, heterohexadecamer of 8 large chains and 8 small chains; disulfide-linked. The disulfide link is formed within the large subunit homodimers. The cofactor is Mg(2+). Post-translationally, the disulfide bond which can form in the large chain dimeric partners within the hexadecamer appears to be associated with oxidative stress and protein turnover.

The protein localises to the carboxysome. It catalyses the reaction 2 (2R)-3-phosphoglycerate + 2 H(+) = D-ribulose 1,5-bisphosphate + CO2 + H2O. The enzyme catalyses D-ribulose 1,5-bisphosphate + O2 = 2-phosphoglycolate + (2R)-3-phosphoglycerate + 2 H(+). In terms of biological role, ruBisCO catalyzes two reactions: the carboxylation of D-ribulose 1,5-bisphosphate, the primary event in carbon dioxide fixation, as well as the oxidative fragmentation of the pentose substrate in the photorespiration process. Both reactions occur simultaneously and in competition at the same active site. This chain is Ribulose bisphosphate carboxylase large chain, found in Synechococcus sp. (strain JA-3-3Ab) (Cyanobacteria bacterium Yellowstone A-Prime).